Here is a 326-residue protein sequence, read N- to C-terminus: tRNA-modifying protein YgfZ (326 aa).

Folate contacts are provided by tryptophan 27 and tryptophan 189.

The protein belongs to the tRNA-modifying YgfZ family.

It localises to the cytoplasm. Folate-binding protein involved in regulating the level of ATP-DnaA and in the modification of some tRNAs. It is probably a key factor in regulatory networks that act via tRNA modification, such as initiation of chromosomal replication. The chain is tRNA-modifying protein YgfZ from Escherichia coli O157:H7 (strain EC4115 / EHEC).